A 213-amino-acid chain; its full sequence is Large ribosomal subunit protein uL3 (213 aa).

Positions 131 to 155 are disordered; it reads GRASHGNSVSHRAHGSTGNNQDPGR. Positions 135 to 152 are enriched in polar residues; sequence HGNSVSHRAHGSTGNNQD. An N5-methylglutamine modification is found at Gln-151.

The protein belongs to the universal ribosomal protein uL3 family. As to quaternary structure, part of the 50S ribosomal subunit. Forms a cluster with proteins L14 and L19. Post-translationally, methylated by PrmB.

One of the primary rRNA binding proteins, it binds directly near the 3'-end of the 23S rRNA, where it nucleates assembly of the 50S subunit. This is Large ribosomal subunit protein uL3 from Agrobacterium fabrum (strain C58 / ATCC 33970) (Agrobacterium tumefaciens (strain C58)).